Reading from the N-terminus, the 292-residue chain is uncharacterized protein (292 aa).

The helical transmembrane segment at 66-86 (LFFYLLFWWTYLTIVVLLTVP) threads the bilayer.

It is found in the host membrane. This is an uncharacterized protein from Alcelaphine herpesvirus 1 (strain C500) (AlHV-1).